The primary structure comprises 323 residues: Acetyl-coenzyme A carboxylase carboxyl transferase subunit alpha (323 aa).

The region spanning 39–293 is the CoA carboxyltransferase C-terminal domain; that stretch reads RLSKKSQQLT…RRALADSLRQ (255 aa).

Belongs to the AccA family. In terms of assembly, acetyl-CoA carboxylase is a heterohexamer composed of biotin carboxyl carrier protein (AccB), biotin carboxylase (AccC) and two subunits each of ACCase subunit alpha (AccA) and ACCase subunit beta (AccD).

It localises to the cytoplasm. The enzyme catalyses N(6)-carboxybiotinyl-L-lysyl-[protein] + acetyl-CoA = N(6)-biotinyl-L-lysyl-[protein] + malonyl-CoA. It participates in lipid metabolism; malonyl-CoA biosynthesis; malonyl-CoA from acetyl-CoA: step 1/1. Component of the acetyl coenzyme A carboxylase (ACC) complex. First, biotin carboxylase catalyzes the carboxylation of biotin on its carrier protein (BCCP) and then the CO(2) group is transferred by the carboxyltransferase to acetyl-CoA to form malonyl-CoA. The chain is Acetyl-coenzyme A carboxylase carboxyl transferase subunit alpha from Paraburkholderia phymatum (strain DSM 17167 / CIP 108236 / LMG 21445 / STM815) (Burkholderia phymatum).